Here is a 474-residue protein sequence, read N- to C-terminus: Aspartyl/glutamyl-tRNA(Asn/Gln) amidotransferase subunit B (474 aa).

Belongs to the GatB/GatE family. GatB subfamily. Heterotrimer of A, B and C subunits.

It catalyses the reaction L-glutamyl-tRNA(Gln) + L-glutamine + ATP + H2O = L-glutaminyl-tRNA(Gln) + L-glutamate + ADP + phosphate + H(+). The enzyme catalyses L-aspartyl-tRNA(Asn) + L-glutamine + ATP + H2O = L-asparaginyl-tRNA(Asn) + L-glutamate + ADP + phosphate + 2 H(+). Allows the formation of correctly charged Asn-tRNA(Asn) or Gln-tRNA(Gln) through the transamidation of misacylated Asp-tRNA(Asn) or Glu-tRNA(Gln) in organisms which lack either or both of asparaginyl-tRNA or glutaminyl-tRNA synthetases. The reaction takes place in the presence of glutamine and ATP through an activated phospho-Asp-tRNA(Asn) or phospho-Glu-tRNA(Gln). This is Aspartyl/glutamyl-tRNA(Asn/Gln) amidotransferase subunit B from Helicobacter hepaticus (strain ATCC 51449 / 3B1).